The following is a 737-amino-acid chain: DNA polymerase iota (737 aa).

A UmuC domain is found at 17–231 (IIHLDMDYFY…GDLKRVTGIG (215 aa)). Position 21 (Asp21) interacts with Mg(2+). 2 residues coordinate a 2'-deoxyribonucleoside 5'-triphosphate: Tyr26 and Arg58. Asp113 contacts Mg(2+). Glu114 is a catalytic residue. DNA-binding stretches follow at residues 212 to 277 (TYAE…FGRD) and 288 to 413 (KTIG…SKFQ). Disordered stretches follow at residues 443–464 (TSLT…RSSP), 482–515 (SPVP…SPKK), 557–581 (DSEK…RFRT), and 607–643 (LSSN…PSPT). Residues 491 to 502 (GSESAATNSDFS) are compositionally biased toward polar residues. Composition is skewed to low complexity over residues 563–577 (PMST…APAP), 607–618 (LSSNASSTASSP), and 632–643 (PSTTTLPFPSPT). The Ubiquitin-binding (UBM) motif lies at 669–686 (VDAEVFKELPVELQTELI).

This sequence belongs to the DNA polymerase type-Y family. Mg(2+) is required as a cofactor. Requires Mn(2+) as cofactor.

The protein resides in the nucleus. It carries out the reaction DNA(n) + a 2'-deoxyribonucleoside 5'-triphosphate = DNA(n+1) + diphosphate. Functionally, error-prone DNA polymerase specifically involved in DNA repair. Plays an important role in translesion synthesis, where the normal high-fidelity DNA polymerases cannot proceed and DNA synthesis stalls. Favors Hoogsteen base-pairing in the active site. Inserts the correct base with higher fidelity opposite an adenosine template. Exhibits low fidelity and efficiency opposite a thymidine template, where it will preferentially insert guanosine. Forms a Schiff base with 5'-deoxyribose phosphate at abasic sites, but may not have lyase activity. This is DNA polymerase iota from Drosophila melanogaster (Fruit fly).